We begin with the raw amino-acid sequence, 209 residues long: FK506-binding protein 2B (209 aa).

A signal peptide spans 1 to 19 (MRFSLLALLGTIVATSVSA). Residues 47–136 (GDELSMHYTG…VFEVELLEIK (90 aa)) enclose the PPIase FKBP-type domain. A helical transmembrane segment spans residues 157–177 (FTSPSFLVSTGIIVALFLIVF). Residues 178 to 207 (KMAKKQDIAEANEKAAAATAEASTEKKEEK) are a coiled coil. The tract at residues 190 to 209 (EKAAAATAEASTEKKEEKKE) is disordered. Over residues 200 to 209 (STEKKEEKKE) the composition is skewed to basic and acidic residues.

The protein belongs to the FKBP-type PPIase family. FKBP2 subfamily.

Its subcellular location is the membrane. It catalyses the reaction [protein]-peptidylproline (omega=180) = [protein]-peptidylproline (omega=0). Inhibited by both FK506 and rapamycin. PPIases accelerate the folding of proteins. It catalyzes the cis-trans isomerization of proline imidic peptide bonds in oligopeptides. The protein is FK506-binding protein 2B (FKBP3) of Rhizopus delemar (strain RA 99-880 / ATCC MYA-4621 / FGSC 9543 / NRRL 43880) (Mucormycosis agent).